The following is a 663-amino-acid chain: Translation factor guf1, mitochondrial (663 aa).

The transit peptide at 1–51 (MRGCLQVLRWLSTSTARRPVSSRPLHEIFPKSEFRRPFTSTILRQAQASRN) directs the protein to the mitochondrion. Residues 65 to 245 (ERFRNFCIVA…TVIERIPAPV (181 aa)) form the tr-type G domain. Residues 74–81 (AHVDHGKS), 138–142 (DTPGH), and 192–195 (NKVD) each bind GTP.

It belongs to the TRAFAC class translation factor GTPase superfamily. Classic translation factor GTPase family. LepA subfamily.

Its subcellular location is the mitochondrion inner membrane. The catalysed reaction is GTP + H2O = GDP + phosphate + H(+). Promotes mitochondrial protein synthesis. May act as a fidelity factor of the translation reaction, by catalyzing a one-codon backward translocation of tRNAs on improperly translocated ribosomes. Binds to mitochondrial ribosomes in a GTP-dependent manner. This Talaromyces marneffei (strain ATCC 18224 / CBS 334.59 / QM 7333) (Penicillium marneffei) protein is Translation factor guf1, mitochondrial (guf1).